A 382-amino-acid polypeptide reads, in one-letter code: Queuine tRNA-ribosyltransferase (382 aa).

D93 functions as the Proton acceptor in the catalytic mechanism. Residues 93-97 (DSGGF), D147, Q191, and G218 each bind substrate. An RNA binding region spans residues 249-255 (GVGKPED). D268 serves as the catalytic Nucleophile. The tract at residues 273 to 277 (TRNAR) is RNA binding; important for wobble base 34 recognition. Zn(2+) contacts are provided by C306, C308, C311, and H337.

It belongs to the queuine tRNA-ribosyltransferase family. Homodimer. Within each dimer, one monomer is responsible for RNA recognition and catalysis, while the other monomer binds to the replacement base PreQ1. It depends on Zn(2+) as a cofactor.

The catalysed reaction is 7-aminomethyl-7-carbaguanine + guanosine(34) in tRNA = 7-aminomethyl-7-carbaguanosine(34) in tRNA + guanine. It functions in the pathway tRNA modification; tRNA-queuosine biosynthesis. Functionally, catalyzes the base-exchange of a guanine (G) residue with the queuine precursor 7-aminomethyl-7-deazaguanine (PreQ1) at position 34 (anticodon wobble position) in tRNAs with GU(N) anticodons (tRNA-Asp, -Asn, -His and -Tyr). Catalysis occurs through a double-displacement mechanism. The nucleophile active site attacks the C1' of nucleotide 34 to detach the guanine base from the RNA, forming a covalent enzyme-RNA intermediate. The proton acceptor active site deprotonates the incoming PreQ1, allowing a nucleophilic attack on the C1' of the ribose to form the product. After dissociation, two additional enzymatic reactions on the tRNA convert PreQ1 to queuine (Q), resulting in the hypermodified nucleoside queuosine (7-(((4,5-cis-dihydroxy-2-cyclopenten-1-yl)amino)methyl)-7-deazaguanosine). The polypeptide is Queuine tRNA-ribosyltransferase (Haemophilus influenzae (strain PittEE)).